The primary structure comprises 286 residues: Eukaryotic translation initiation factor 3 subunit F-2 (286 aa).

The 137-residue stretch at 11 to 147 folds into the MPN domain; the sequence is ILLQPLVLLH…MRLYTAVVMG (137 aa).

It belongs to the eIF-3 subunit F family. As to quaternary structure, component of the eukaryotic translation initiation factor 3 (eIF-3) complex. The eIF-3 complex interacts with pix.

Its subcellular location is the cytoplasm. Its function is as follows. Component of the eukaryotic translation initiation factor 3 (eIF-3) complex, which is involved in protein synthesis of a specialized repertoire of mRNAs and, together with other initiation factors, stimulates binding of mRNA and methionyl-tRNAi to the 40S ribosome. The eIF-3 complex specifically targets and initiates translation of a subset of mRNAs involved in cell proliferation. In Drosophila willistoni (Fruit fly), this protein is Eukaryotic translation initiation factor 3 subunit F-2.